The following is a 127-amino-acid chain: Holo-[acyl-carrier-protein] synthase (127 aa).

Residues aspartate 8 and glutamate 57 each contribute to the Mg(2+) site.

The protein belongs to the P-Pant transferase superfamily. AcpS family. The cofactor is Mg(2+).

It is found in the cytoplasm. The catalysed reaction is apo-[ACP] + CoA = holo-[ACP] + adenosine 3',5'-bisphosphate + H(+). Its function is as follows. Transfers the 4'-phosphopantetheine moiety from coenzyme A to a Ser of acyl-carrier-protein. This Ruthia magnifica subsp. Calyptogena magnifica protein is Holo-[acyl-carrier-protein] synthase.